Consider the following 359-residue polypeptide: Lactosylceramide 4-alpha-galactosyltransferase (359 aa).

Over 1 to 30 the chain is Cytoplasmic; that stretch reads MGISCSHLEETMSKPPDCLLRMLRGTPRQR. Residues 31-51 traverse the membrane as a helical; Signal-anchor for type II membrane protein segment; that stretch reads VFTFFIISFKFMFLISILIYW. The Lumenal segment spans residues 52–359; sequence HTVGAPKDQR…TTHRAMKMYL (308 aa). The DXD motif signature appears at 198–200; that stretch reads DTD. N-linked (GlcNAc...) asparagine glycosylation is found at asparagine 209 and asparagine 315.

This sequence belongs to the glycosyltransferase 32 family.

Its subcellular location is the golgi apparatus membrane. It carries out the reaction a beta-D-Gal-(1-&gt;4)-beta-D-Glc-(1&lt;-&gt;1)-Cer(d18:1(4E)) + UDP-alpha-D-galactose = a globoside Gb3Cer (d18:1(4E)) + UDP + H(+). The catalysed reaction is a beta-D-Gal-(1&lt;-&gt;1')-ceramide + UDP-alpha-D-galactose = alpha-D-Gal-(1-&gt;4)-beta-D-Gal-(1&lt;-&gt;1')-Cer + UDP + H(+). Its pathway is glycolipid biosynthesis. Catalyzes the transfer of galactose from UDP-alpha-D-galactose to lactosylceramide/beta-D-galactosyl-(1-&gt;4)-beta-D-glucosyl-(1&lt;-&gt;1)-ceramide(d18:1(4E)) to produce globotriaosylceramide/globoside Gb3Cer (d18:1(4E)). Also able to transfer galactose to galactosylceramide/beta-D-Gal-(1&lt;-&gt;1')-Cer. Globoside Gb3Cer is a glycosphingolipid of the globo serie, one of the major types of neutral root structures of glycosphingolipids, that constitute a significant portion of mammalian cell membranes. In Mus musculus (Mouse), this protein is Lactosylceramide 4-alpha-galactosyltransferase.